The chain runs to 438 residues: GTPase Der (438 aa).

2 EngA-type G domains span residues 4–168 (PIVA…PKGY) and 177–352 (IRIA…TNYS). Residues 10–17 (GRPNVGKS), 57–61 (DTGGI), 120–123 (NKID), 183–190 (GKPNVGKS), 230–234 (DTAGL), and 295–298 (NKWD) each bind GTP. The KH-like domain occupies 353–437 (KRISTGVLND…GIKMEFRERK (85 aa)).

This sequence belongs to the TRAFAC class TrmE-Era-EngA-EngB-Septin-like GTPase superfamily. EngA (Der) GTPase family. As to quaternary structure, associates with the 50S ribosomal subunit.

GTPase that plays an essential role in the late steps of ribosome biogenesis. The chain is GTPase Der from Clostridium tetani (strain Massachusetts / E88).